The chain runs to 85 residues: Polcalcin Bet v 4 (85 aa).

EF-hand domains follow at residues 7–42 (QDKAERERIFKRFDANGDGKISAAELGEALKTLGSI) and 42–77 (ITPDEVKHMMAEIDTDGDGFISFQEFTDFGRANRGL). Residues aspartate 20, asparagine 22, aspartate 24, lysine 26, glutamate 31, aspartate 55, aspartate 57, aspartate 59, and glutamate 66 each coordinate Ca(2+).

In terms of assembly, monomer.

This is Polcalcin Bet v 4 (BETV4) from Betula pendula (European white birch).